An 867-amino-acid polypeptide reads, in one-letter code: Alanine--tRNA ligase (867 aa).

Positions 555, 559, 657, and 661 each coordinate Zn(2+).

It belongs to the class-II aminoacyl-tRNA synthetase family. Zn(2+) serves as cofactor.

It localises to the cytoplasm. The enzyme catalyses tRNA(Ala) + L-alanine + ATP = L-alanyl-tRNA(Ala) + AMP + diphosphate. Its function is as follows. Catalyzes the attachment of alanine to tRNA(Ala) in a two-step reaction: alanine is first activated by ATP to form Ala-AMP and then transferred to the acceptor end of tRNA(Ala). Also edits incorrectly charged Ser-tRNA(Ala) and Gly-tRNA(Ala) via its editing domain. The chain is Alanine--tRNA ligase from Psychromonas ingrahamii (strain DSM 17664 / CCUG 51855 / 37).